Consider the following 28-residue polypeptide: Ranatuerin-2LT (28 aa).

A disulfide bridge connects residues cysteine 23 and cysteine 28.

In terms of tissue distribution, expressed by the skin glands.

The protein resides in the secreted. Functionally, has antibacterial activity. The chain is Ranatuerin-2LT from Rana latastei (Italian agile frog).